A 196-amino-acid polypeptide reads, in one-letter code: ATP-dependent Clp protease proteolytic subunit (196 aa).

S101 acts as the Nucleophile in catalysis. H126 is a catalytic residue.

Belongs to the peptidase S14 family. In terms of assembly, component of the chloroplastic Clp protease core complex.

The protein resides in the plastid. Its subcellular location is the chloroplast stroma. It carries out the reaction Hydrolysis of proteins to small peptides in the presence of ATP and magnesium. alpha-casein is the usual test substrate. In the absence of ATP, only oligopeptides shorter than five residues are hydrolyzed (such as succinyl-Leu-Tyr-|-NHMec, and Leu-Tyr-Leu-|-Tyr-Trp, in which cleavage of the -Tyr-|-Leu- and -Tyr-|-Trp bonds also occurs).. In terms of biological role, cleaves peptides in various proteins in a process that requires ATP hydrolysis. Has a chymotrypsin-like activity. Plays a major role in the degradation of misfolded proteins. This Eucalyptus globulus subsp. globulus (Tasmanian blue gum) protein is ATP-dependent Clp protease proteolytic subunit.